A 192-amino-acid polypeptide reads, in one-letter code: UPF0312 protein Psyr_0457 (192 aa).

Residues 1–23 form the signal peptide; the sequence is MLKKSLAALALGTALLSAGQAMA.

It belongs to the UPF0312 family. Type 1 subfamily.

The protein resides in the periplasm. In Pseudomonas syringae pv. syringae (strain B728a), this protein is UPF0312 protein Psyr_0457.